We begin with the raw amino-acid sequence, 99 residues long: Aspartyl/glutamyl-tRNA(Asn/Gln) amidotransferase subunit C (99 aa).

This sequence belongs to the GatC family. Heterotrimer of A, B and C subunits.

The enzyme catalyses L-glutamyl-tRNA(Gln) + L-glutamine + ATP + H2O = L-glutaminyl-tRNA(Gln) + L-glutamate + ADP + phosphate + H(+). It catalyses the reaction L-aspartyl-tRNA(Asn) + L-glutamine + ATP + H2O = L-asparaginyl-tRNA(Asn) + L-glutamate + ADP + phosphate + 2 H(+). Its function is as follows. Allows the formation of correctly charged Asn-tRNA(Asn) or Gln-tRNA(Gln) through the transamidation of misacylated Asp-tRNA(Asn) or Glu-tRNA(Gln) in organisms which lack either or both of asparaginyl-tRNA or glutaminyl-tRNA synthetases. The reaction takes place in the presence of glutamine and ATP through an activated phospho-Asp-tRNA(Asn) or phospho-Glu-tRNA(Gln). In Cupriavidus taiwanensis (strain DSM 17343 / BCRC 17206 / CCUG 44338 / CIP 107171 / LMG 19424 / R1) (Ralstonia taiwanensis (strain LMG 19424)), this protein is Aspartyl/glutamyl-tRNA(Asn/Gln) amidotransferase subunit C.